A 555-amino-acid polypeptide reads, in one-letter code: Chaperonin GroEL 2 (555 aa).

Residues 29 to 32, 86 to 90, Gly-414, 480 to 482, and Asp-496 each bind ATP; these read TLGP, DGTTT, and NAL.

Belongs to the chaperonin (HSP60) family. Forms a cylinder of 14 subunits composed of two heptameric rings stacked back-to-back. Interacts with the co-chaperonin GroES.

It is found in the cytoplasm. It catalyses the reaction ATP + H2O + a folded polypeptide = ADP + phosphate + an unfolded polypeptide.. In terms of biological role, together with its co-chaperonin GroES, plays an essential role in assisting protein folding. The GroEL-GroES system forms a nano-cage that allows encapsulation of the non-native substrate proteins and provides a physical environment optimized to promote and accelerate protein folding. The sequence is that of Chaperonin GroEL 2 from Synechococcus sp. (strain ATCC 27144 / PCC 6301 / SAUG 1402/1) (Anacystis nidulans).